The chain runs to 449 residues: XK-related protein 2 (449 aa).

10 helical membrane passes run 35-55 (FSIL…LYMV), 68-88 (TYTF…LIFV), 98-118 (LSLF…EAMI), 174-194 (IQAF…SLIS), 202-222 (VVLM…CNML), 241-261 (LCIT…LVLF), 269-289 (AVPF…IKFW), 306-326 (VGTL…NFSC), 357-377 (LVEN…VLLN), and 382-402 (LIAL…LLFF).

The protein belongs to the XK family. Expressed predominantly in the placenta, in syncytiotrophoblasts. Moderate levels in the adrenal gland, low levels in the trachea and very low levels in the bone marrow.

It localises to the cell membrane. This chain is XK-related protein 2 (XKRX), found in Homo sapiens (Human).